We begin with the raw amino-acid sequence, 631 residues long: Chaperone protein DnaK (631 aa).

A Phosphothreonine; by autocatalysis modification is found at Thr198. Positions 598-631 (YSAQQGGEQPGAAKKDDVVDAEFTEVDDDKKKSA) are disordered.

Belongs to the heat shock protein 70 family.

In terms of biological role, acts as a chaperone. In Azorhizobium caulinodans (strain ATCC 43989 / DSM 5975 / JCM 20966 / LMG 6465 / NBRC 14845 / NCIMB 13405 / ORS 571), this protein is Chaperone protein DnaK.